The chain runs to 602 residues: Glutamine--fructose-6-phosphate aminotransferase [isomerizing] (602 aa).

The active-site Nucleophile; for GATase activity is C2. In terms of domain architecture, Glutamine amidotransferase type-2 spans 2 to 217; that stretch reads CGIVGVVGNT…DQELVIVKAD (216 aa). The segment at 67-87 is disordered; it reads IGHTRWATHGKPTEDNAHPHR. Over residues 77–87 the composition is skewed to basic and acidic residues; sequence KPTEDNAHPHR. 2 consecutive SIS domains span residues 283-422 and 455-592; these read IIKA…ANGN and VREL…VDKP. The active-site For Fru-6P isomerization activity is K597.

As to quaternary structure, homodimer.

It is found in the cytoplasm. The catalysed reaction is D-fructose 6-phosphate + L-glutamine = D-glucosamine 6-phosphate + L-glutamate. Its function is as follows. Catalyzes the first step in hexosamine metabolism, converting fructose-6P into glucosamine-6P using glutamine as a nitrogen source. The sequence is that of Glutamine--fructose-6-phosphate aminotransferase [isomerizing] from Streptococcus pneumoniae (strain ATCC BAA-255 / R6).